Consider the following 619-residue polypeptide: Dihydroxy-acid dehydratase 1 (619 aa).

Residue D81 coordinates Mg(2+). Residue C122 participates in [2Fe-2S] cluster binding. Positions 123 and 124 each coordinate Mg(2+). An N6-carboxylysine modification is found at K124. Position 201 (C201) interacts with [2Fe-2S] cluster. E496 lines the Mg(2+) pocket. Residue S522 is the Proton acceptor of the active site.

This sequence belongs to the IlvD/Edd family. As to quaternary structure, homodimer. The cofactor is [2Fe-2S] cluster. Requires Mg(2+) as cofactor.

It carries out the reaction (2R)-2,3-dihydroxy-3-methylbutanoate = 3-methyl-2-oxobutanoate + H2O. It catalyses the reaction (2R,3R)-2,3-dihydroxy-3-methylpentanoate = (S)-3-methyl-2-oxopentanoate + H2O. The protein operates within amino-acid biosynthesis; L-isoleucine biosynthesis; L-isoleucine from 2-oxobutanoate: step 3/4. Its pathway is amino-acid biosynthesis; L-valine biosynthesis; L-valine from pyruvate: step 3/4. Functions in the biosynthesis of branched-chain amino acids. Catalyzes the dehydration of (2R,3R)-2,3-dihydroxy-3-methylpentanoate (2,3-dihydroxy-3-methylvalerate) into 2-oxo-3-methylpentanoate (2-oxo-3-methylvalerate) and of (2R)-2,3-dihydroxy-3-methylbutanoate (2,3-dihydroxyisovalerate) into 2-oxo-3-methylbutanoate (2-oxoisovalerate), the penultimate precursor to L-isoleucine and L-valine, respectively. This is Dihydroxy-acid dehydratase 1 from Burkholderia lata (strain ATCC 17760 / DSM 23089 / LMG 22485 / NCIMB 9086 / R18194 / 383).